We begin with the raw amino-acid sequence, 188 residues long: dCTP deaminase (188 aa).

DCTP-binding positions include 111–116 (KSTYAR), 135–137 (TLE), glutamine 156, tyrosine 170, and glutamine 180. Glutamate 137 functions as the Proton donor/acceptor in the catalytic mechanism.

It belongs to the dCTP deaminase family. As to quaternary structure, homotrimer.

It carries out the reaction dCTP + H2O + H(+) = dUTP + NH4(+). It functions in the pathway pyrimidine metabolism; dUMP biosynthesis; dUMP from dCTP (dUTP route): step 1/2. Catalyzes the deamination of dCTP to dUTP. The polypeptide is dCTP deaminase (Marinobacter nauticus (strain ATCC 700491 / DSM 11845 / VT8) (Marinobacter aquaeolei)).